The following is a 441-amino-acid chain: Proline--tRNA ligase (441 aa).

This sequence belongs to the class-II aminoacyl-tRNA synthetase family. ProS type 2 subfamily. In terms of assembly, homodimer.

Its subcellular location is the cytoplasm. The catalysed reaction is tRNA(Pro) + L-proline + ATP = L-prolyl-tRNA(Pro) + AMP + diphosphate. Its function is as follows. Catalyzes the attachment of proline to tRNA(Pro) in a two-step reaction: proline is first activated by ATP to form Pro-AMP and then transferred to the acceptor end of tRNA(Pro). In Afipia carboxidovorans (strain ATCC 49405 / DSM 1227 / KCTC 32145 / OM5) (Oligotropha carboxidovorans), this protein is Proline--tRNA ligase.